A 315-amino-acid polypeptide reads, in one-letter code: Methionyl-tRNA formyltransferase (315 aa).

113 to 116 contributes to the (6S)-5,6,7,8-tetrahydrofolate binding site; sequence SLLP.

Belongs to the Fmt family.

The enzyme catalyses L-methionyl-tRNA(fMet) + (6R)-10-formyltetrahydrofolate = N-formyl-L-methionyl-tRNA(fMet) + (6S)-5,6,7,8-tetrahydrofolate + H(+). Attaches a formyl group to the free amino group of methionyl-tRNA(fMet). The formyl group appears to play a dual role in the initiator identity of N-formylmethionyl-tRNA by promoting its recognition by IF2 and preventing the misappropriation of this tRNA by the elongation apparatus. This is Methionyl-tRNA formyltransferase from Klebsiella pneumoniae subsp. pneumoniae (strain ATCC 700721 / MGH 78578).